The sequence spans 916 residues: Phosphoenolpyruvate carboxylase (916 aa).

Active-site residues include H144 and K578.

Belongs to the PEPCase type 1 family. Mg(2+) is required as a cofactor.

It catalyses the reaction oxaloacetate + phosphate = phosphoenolpyruvate + hydrogencarbonate. In terms of biological role, forms oxaloacetate, a four-carbon dicarboxylic acid source for the tricarboxylic acid cycle. This is Phosphoenolpyruvate carboxylase from Aromatoleum aromaticum (strain DSM 19018 / LMG 30748 / EbN1) (Azoarcus sp. (strain EbN1)).